The sequence spans 294 residues: Ribosomal RNA small subunit methyltransferase H (294 aa).

S-adenosyl-L-methionine contacts are provided by residues 36–38 (GGH), Asp55, Phe82, Asp97, and Gln104.

The protein belongs to the methyltransferase superfamily. RsmH family.

The protein resides in the cytoplasm. The enzyme catalyses cytidine(1402) in 16S rRNA + S-adenosyl-L-methionine = N(4)-methylcytidine(1402) in 16S rRNA + S-adenosyl-L-homocysteine + H(+). Its function is as follows. Specifically methylates the N4 position of cytidine in position 1402 (C1402) of 16S rRNA. The protein is Ribosomal RNA small subunit methyltransferase H of Synechococcus sp. (strain CC9605).